Consider the following 876-residue polypeptide: Leucine--tRNA ligase (876 aa).

Positions 42–52 match the 'HIGH' region motif; sequence PYPSGKLHMGH. Positions 634–638 match the 'KMSKS' region motif; it reads KMGKS. An ATP-binding site is contributed by Lys-637.

This sequence belongs to the class-I aminoacyl-tRNA synthetase family.

It localises to the cytoplasm. It carries out the reaction tRNA(Leu) + L-leucine + ATP = L-leucyl-tRNA(Leu) + AMP + diphosphate. The chain is Leucine--tRNA ligase from Variovorax paradoxus (strain S110).